Consider the following 194-residue polypeptide: Peptidyl-tRNA hydrolase (194 aa).

Tyrosine 17 is a tRNA binding site. Residue histidine 22 is the Proton acceptor of the active site. TRNA is bound by residues phenylalanine 68, asparagine 70, and asparagine 116.

Belongs to the PTH family. As to quaternary structure, monomer.

It is found in the cytoplasm. It catalyses the reaction an N-acyl-L-alpha-aminoacyl-tRNA + H2O = an N-acyl-L-amino acid + a tRNA + H(+). Hydrolyzes ribosome-free peptidyl-tRNAs (with 1 or more amino acids incorporated), which drop off the ribosome during protein synthesis, or as a result of ribosome stalling. In terms of biological role, catalyzes the release of premature peptidyl moieties from peptidyl-tRNA molecules trapped in stalled 50S ribosomal subunits, and thus maintains levels of free tRNAs and 50S ribosomes. The polypeptide is Peptidyl-tRNA hydrolase (Shewanella sediminis (strain HAW-EB3)).